A 206-amino-acid chain; its full sequence is Adenine phosphoribosyltransferase (206 aa).

The protein belongs to the purine/pyrimidine phosphoribosyltransferase family. Homodimer.

It is found in the cytoplasm. The enzyme catalyses AMP + diphosphate = 5-phospho-alpha-D-ribose 1-diphosphate + adenine. Its pathway is purine metabolism; AMP biosynthesis via salvage pathway; AMP from adenine: step 1/1. Catalyzes a salvage reaction resulting in the formation of AMP, that is energically less costly than de novo synthesis. The protein is Adenine phosphoribosyltransferase of Burkholderia mallei (strain NCTC 10229).